A 343-amino-acid polypeptide reads, in one-letter code: E3 ubiquitin-protein ligase RNF113A (343 aa).

The residue at position 2 (Ala-2) is an N-acetylalanine. The interval 2–60 (AEQLSPGKAVDQVCTFLFKKPGRKGAAGRRKRPACDPEPGESGSSSDEGCTVVRPEKKR) is important for interaction with SNRNP200/BRR2. The residue at position 6 (Ser-6) is a Phosphoserine. The segment covering 22–33 (PGRKGAAGRRKR) has biased composition (basic residues). Residues 22 to 96 (PGRKGAAGRR…EEEENEPESL (75 aa)) are disordered. Over residues 41 to 50 (GESGSSSDEG) the composition is skewed to low complexity. The important for interaction with CXCR4 stretch occupies residues 50–61 (GCTVVRPEKKRV). Residues Ser-84 and Ser-85 each carry the phosphoserine modification. Residues 84–93 (SSEEEEENEP) are compositionally biased toward acidic residues. The C3H1-type zinc finger occupies 196 to 224 (DYQPDICKDYKETGFCGFGDSCKFLHDRS). Phosphoserine is present on Ser-253. The segment at 262 to 300 (CFICRQSFQNPVVTKCRHYFCESCALQHFRTTPRCYVCD) adopts an RING-type zinc-finger fold. The tract at residues 322-343 (ATGEGGASDLPEDPDEDAIPIT) is disordered. Positions 331 to 343 (LPEDPDEDAIPIT) are enriched in acidic residues.

Component of pre-catalytic and catalytic spliceosome complexes. Interacts (via N-terminus) with the spliceosome subunit SNRNP200/BRR2. Component of the minor spliceosome, which splices U12-type introns. Within this complex, interacts with SCNM1 and CRIPT. Ubiquitous.

Its subcellular location is the nucleus. The protein localises to the nucleus speckle. The catalysed reaction is S-ubiquitinyl-[E2 ubiquitin-conjugating enzyme]-L-cysteine + [acceptor protein]-L-lysine = [E2 ubiquitin-conjugating enzyme]-L-cysteine + N(6)-ubiquitinyl-[acceptor protein]-L-lysine.. It functions in the pathway protein modification; protein ubiquitination. In terms of biological role, required for pre-mRNA splicing as component of the spliceosome. As a component of the minor spliceosome, involved in the splicing of U12-type introns in pre-mRNAs. E3 ubiquitin-protein ligase that catalyzes the transfer of ubiquitin onto target proteins. Catalyzes polyubiquitination of SNRNP200/BRR2 with non-canonical 'Lys-63'-linked polyubiquitin chains. Plays a role in DNA repair via its role in the synthesis of 'Lys-63'-linked polyubiquitin chains that recruit ALKBH3 and the ASCC complex to sites of DNA damage by alkylating agents. Ubiquitinates CXCR4, leading to its degradation, and thereby contributes to the termination of CXCR4 signaling. The protein is E3 ubiquitin-protein ligase RNF113A (RNF113A) of Homo sapiens (Human).